A 483-amino-acid chain; its full sequence is MILFLCLIILFIITILFFKKHKTVNKIINFPSPPRLPLIGNLHQLSQHPHRSLCYLSHRYGPLMLLHFGSVPVIVASTAEAARDVLKTHDRVFASRPRSKIFEKLLYKSRNMASAPYGEYWRQMKSVSVLHLLSNKMVRSFQDVRQEEITLMMETIRKSSSKPVNLSKILSSLTNDVICRVALGRKYGVGTDFKELIDRLMRQLGTFTIGSYVPWLAWTDWVSGLEARLEKTANDFDKLLERIVQDHEDGDGDKTDFVDVLLAAQRDKSFGFDIDRLSIKAIVLDAFVGGTDTSSTLVEWEMTELLRHPTCLKKLQEEVRTICKGKSSVSEDDIQGMEYLKAVVKEALRLHPPVPLMVPHQSTQDVRLRDNHIPAGTQVIVNLWAVGREAATWGPDANEFRPERHLESPSDFRGQDFELIPFGAGRRMCPGISFAVVLNEVVLANLVHGFDWQSIDDETDVAESIGSVIRRMHPLYVIPSSTT.

A helical transmembrane segment spans residues Met-1–His-21. Cys-429 lines the heme pocket.

This sequence belongs to the cytochrome P450 family. Requires heme as cofactor.

It is found in the membrane. This chain is Cytochrome P450 71A23 (CYP71A23), found in Arabidopsis thaliana (Mouse-ear cress).